A 168-amino-acid chain; its full sequence is Protein FAM163A (168 aa).

A helical membrane pass occupies residues 6–26; that stretch reads VVITGGILATVILLCIIAVLC.

The protein belongs to the FAM163 family.

It is found in the membrane. The polypeptide is Protein FAM163A (Fam163a) (Mus musculus (Mouse)).